The following is an 806-amino-acid chain: Leucine--tRNA ligase (806 aa).

A 'HIGH' region motif is present at residues 54-64 (SYPSGDLHMGH). Positions 571 to 575 (KMSKS) match the 'KMSKS' region motif. K574 lines the ATP pocket.

Belongs to the class-I aminoacyl-tRNA synthetase family.

The protein localises to the cytoplasm. It catalyses the reaction tRNA(Leu) + L-leucine + ATP = L-leucyl-tRNA(Leu) + AMP + diphosphate. The chain is Leucine--tRNA ligase from Tropheryma whipplei (strain Twist) (Whipple's bacillus).